A 512-amino-acid chain; its full sequence is 2,3-bisphosphoglycerate-independent phosphoglycerate mutase (512 aa).

2 residues coordinate Mn(2+): Asp-12 and Ser-62. The active-site Phosphoserine intermediate is Ser-62. Residues His-123, 153–154 (RD), Arg-185, Arg-191, 260–263 (RPDR), and Lys-333 contribute to the substrate site. Residues Asp-400, His-404, Asp-441, His-442, and His-460 each contribute to the Mn(2+) site.

The protein belongs to the BPG-independent phosphoglycerate mutase family. As to quaternary structure, monomer. Requires Mn(2+) as cofactor.

The catalysed reaction is (2R)-2-phosphoglycerate = (2R)-3-phosphoglycerate. The protein operates within carbohydrate degradation; glycolysis; pyruvate from D-glyceraldehyde 3-phosphate: step 3/5. Its function is as follows. Catalyzes the interconversion of 2-phosphoglycerate and 3-phosphoglycerate. This is 2,3-bisphosphoglycerate-independent phosphoglycerate mutase from Clostridium perfringens (strain ATCC 13124 / DSM 756 / JCM 1290 / NCIMB 6125 / NCTC 8237 / Type A).